The following is a 38-amino-acid chain: Defensin-like peptide 3 (38 aa).

2 cysteine pairs are disulfide-bonded: C6–C36 and C13–C29.

Produced by the crural gland and detected in venom from the spur located on each male hind leg.

The protein resides in the secreted. In terms of biological role, does not show antimicrobial, myotoxic, hemolytic and cell-promoting activities. The sequence is that of Defensin-like peptide 3 from Ornithorhynchus anatinus (Duckbill platypus).